A 152-amino-acid chain; its full sequence is Lipoprotein signal peptidase (152 aa).

3 helical membrane passes run 5 to 25 (LFVLSLILLVALDQLSKFWIV), 61 to 81 (WFFVAITVLVIGYAIYYLATH), and 84 to 104 (LNIWKQLALLLIISGGIGNFI). Active-site residues include Asp114 and Asp130. The helical transmembrane segment at 125-145 (IFNVADSYLTVGVILLVICLW) threads the bilayer.

Belongs to the peptidase A8 family.

The protein localises to the cell membrane. It catalyses the reaction Release of signal peptides from bacterial membrane prolipoproteins. Hydrolyzes -Xaa-Yaa-Zaa-|-(S,diacylglyceryl)Cys-, in which Xaa is hydrophobic (preferably Leu), and Yaa (Ala or Ser) and Zaa (Gly or Ala) have small, neutral side chains.. It participates in protein modification; lipoprotein biosynthesis (signal peptide cleavage). This protein specifically catalyzes the removal of signal peptides from prolipoproteins. The sequence is that of Lipoprotein signal peptidase from Streptococcus pyogenes serotype M6 (strain ATCC BAA-946 / MGAS10394).